We begin with the raw amino-acid sequence, 103 residues long: Histone H4 (103 aa).

Over residues 1 to 14 (MSGRGKGGKGLGKG) the composition is skewed to gly residues. The segment at 1-20 (MSGRGKGGKGLGKGGAKRHR) is disordered. Position 2 is an N-acetylserine (serine 2). An N6-acetyl-N6-methyllysine; alternate mark is found at lysine 6 and lysine 13. Lysine 17 bears the N6-acetyllysine mark. Residues 17-21 (KRHRK) mediate DNA binding. An N6-methyllysine modification is found at lysine 21.

Belongs to the histone H4 family. In terms of assembly, the nucleosome is a histone octamer containing two molecules each of H2A, H2B, H3 and H4 assembled in one H3-H4 heterotetramer and two H2A-H2B heterodimers. The octamer wraps approximately 147 bp of DNA.

It localises to the nucleus. The protein localises to the chromosome. In terms of biological role, core component of nucleosome. Nucleosomes wrap and compact DNA into chromatin, limiting DNA accessibility to the cellular machineries which require DNA as a template. Histones thereby play a central role in transcription regulation, DNA repair, DNA replication and chromosomal stability. DNA accessibility is regulated via a complex set of post-translational modifications of histones, also called histone code, and nucleosome remodeling. This chain is Histone H4, found in Ascaris suum (Pig roundworm).